The chain runs to 315 residues: Homoserine kinase (315 aa).

ATP is bound at residue 97 to 107 (PPARGLGSSAT).

It belongs to the GHMP kinase family. Homoserine kinase subfamily.

The protein localises to the cytoplasm. It carries out the reaction L-homoserine + ATP = O-phospho-L-homoserine + ADP + H(+). The protein operates within amino-acid biosynthesis; L-threonine biosynthesis; L-threonine from L-aspartate: step 4/5. Functionally, catalyzes the ATP-dependent phosphorylation of L-homoserine to L-homoserine phosphate. The sequence is that of Homoserine kinase from Prochlorococcus marinus (strain NATL2A).